A 950-amino-acid polypeptide reads, in one-letter code: Protein translocase subunit SecA 1 (950 aa).

ATP contacts are provided by residues glutamine 83, 101–105 (GEGKT), and aspartate 490. The tract at residues 864-950 (EGGAGRKNAA…AKPPKSVKKR (87 aa)) is disordered. A compositionally biased stretch (basic and acidic residues) spans 873–888 (AAREEAPSRLRAKGIE).

Belongs to the SecA family. Monomer and homodimer. Part of the essential Sec protein translocation apparatus which comprises SecA, SecYEG and auxiliary proteins SecDF. Other proteins may also be involved.

The protein localises to the cell membrane. The protein resides in the cytoplasm. It carries out the reaction ATP + H2O + cellular proteinSide 1 = ADP + phosphate + cellular proteinSide 2.. Its function is as follows. Part of the Sec protein translocase complex. Interacts with the SecYEG preprotein conducting channel. Has a central role in coupling the hydrolysis of ATP to the transfer of proteins into and across the cell membrane, serving as an ATP-driven molecular motor driving the stepwise translocation of polypeptide chains across the membrane. This chain is Protein translocase subunit SecA 1, found in Mycobacterium ulcerans (strain Agy99).